The following is a 731-amino-acid chain: Autophagy-related protein 20 (731 aa).

The span at 1–22 (MSSVLRNQDNPPTISEVSSTTK) shows a compositional bias: polar residues. The tract at residues 1–130 (MSSVLRNQDN…NNKSNNVSRV (130 aa)) is disordered. Positions 31-41 (KQEEKEKEKEI) are enriched in basic and acidic residues. Residues 69–82 (SFMTANSFNEGPNT) show a composition bias toward polar residues. Composition is skewed to low complexity over residues 92 to 102 (NNNSSSNNNRG) and 113 to 128 (LLLY…NNVS). Residues 164 to 340 (IQITEAGNSN…KFLDPNANWG (177 aa)) enclose the PX domain. Residues Arg205, Ser207, and Lys231 each coordinate a 1,2-diacyl-sn-glycero-3-phospho-(1D-myo-inositol-3-phosphate). The tract at residues 253-277 (SVAGSNGNSGGSGGGGASGGAGSGS) is disordered. Over residues 259–277 (GNSGGSGGGGASGGAGSGS) the composition is skewed to gly residues. Arg306 contacts a 1,2-diacyl-sn-glycero-3-phospho-(1D-myo-inositol-3-phosphate). Positions 586 to 626 (NSQVKPKNGKYNLEQQQSSTVSPAPPPGPPPSSSSSSSSSS) are disordered. Pro residues predominate over residues 608–617 (PAPPPGPPPS).

It belongs to the sorting nexin family.

It is found in the endosome membrane. The protein resides in the preautophagosomal structure membrane. In terms of biological role, required for cytoplasm to vacuole transport (Cvt), pexophagy and mitophagy. Also involved in endoplasmic reticulum-specific autophagic process and is essential for the survival of cells subjected to severe ER stress. Functions in protein retrieval from the endocytic pathway. The protein is Autophagy-related protein 20 (ATG20) of Candida albicans (strain SC5314 / ATCC MYA-2876) (Yeast).